The following is a 123-amino-acid chain: Large ribosomal subunit protein bL12 (123 aa).

The protein belongs to the bacterial ribosomal protein bL12 family. As to quaternary structure, homodimer. Part of the ribosomal stalk of the 50S ribosomal subunit. Forms a multimeric L10(L12)X complex, where L10 forms an elongated spine to which 2 to 4 L12 dimers bind in a sequential fashion. Binds GTP-bound translation factors.

Functionally, forms part of the ribosomal stalk which helps the ribosome interact with GTP-bound translation factors. Is thus essential for accurate translation. This is Large ribosomal subunit protein bL12 from Rhodopseudomonas palustris (strain BisB5).